The following is a 480-amino-acid chain: MIVADSECHSEIKGYLPFTRGGVAGPETREEHREGQARRGSRGPSAFIPVEEILREGAESLEQHLGLEALMSSGRVDNLAVVMGLHPDYLSSFWRLHYLLLHTDGPLASSWRHYIAIMAAARHQCSYLVGSHMTEFLQTGGDPEWLLGLHRAPEKLRKLSEVNKLLAHRPWLITKEHIQALLKTGEHSWSLAELIQALVLLTHCHSLASFVFGCGILPEGDAEGSPASQAPSPPSEQGTPPSGDPLNNSGGFEAARDVEALMERMRQLQESLLRDEGASQEEMENRFELEKSESLLVTPSADILEPSPHPDILCFVEDPAFGYEDFTRRGTQAPPTFRAQDYTWEDHGYSLIQRLYPEGGQLLDEKFQVACSLTYNTIAMHSGVDTSMLRRAIWNYIHCVFGIRYDDYDYGEVNQLLERNLKIYIKTVACYPEKTTRRMYNLFWRHFRHSEKVHVNLLLLEARMQAALLYALRAITRYMT.

The residue at position 1 (Met-1) is an N-acetylmethionine. The segment at 20–43 (RGGVAGPETREEHREGQARRGSRG) is disordered. The span at 27 to 37 (ETREEHREGQA) shows a compositional bias: basic and acidic residues. Residues 66–239 (GLEALMSSGR…APSPPSEQGT (174 aa)) form an N-terminal domain; mediates the alkylhydroperoxide reductase activity region. The active-site Cysteine sulfenic acid (-SOH) intermediate is Cys-125. A Glycyl lysine isopeptide (Lys-Gly) (interchain with G-Cter in ubiquitin) cross-link involves residue Lys-175. Disordered regions lie at residues 221–251 (DAEG…NSGG) and 272–291 (LLRD…ELEK). Residues 223–238 (EGSPASQAPSPPSEQG) show a composition bias toward low complexity. Phosphoserine is present on Ser-249. Positions 308-480 (PHPDILCFVE…ALRAITRYMT (173 aa)) are C-terminal domain; mediates TORC1 regulation. L-leucine contacts are provided by residues 374 to 377 (TYNT), Thr-386, and Glu-451.

This sequence belongs to the sestrin family. In terms of assembly, interacts with the GATOR2 complex which is composed of MIOS, SEC13, SEH1L, WDR24 and WDR59; the interaction is negatively regulated by leucine. Conveys leucine availability via direct interaction with SEH1L and WDR24 components of the GATOR2 complex. Interacts with RRAGA, RRAGB, RRAGC and RRAGD; may function as a guanine nucleotide dissociation inhibitor for RRAGs and regulate them. May interact with the TORC2 complex. Interacts with KEAP1, RBX1, SQSTM and ULK1; to regulate the degradation of KEAP1. May also associate with the complex composed of TSC1, TSC2 and the AMP-responsive protein kinase/AMPK to regulate TORC1 signaling. May interact with PRDX1. Post-translationally, phosphorylated by ULK1 at multiple sites. Ubiquitinated at Lys-175 by RNF167 via 'Lys-63'-linked polyubiquitination in response to leucine deprivation: ubiquitination promotes SESN2-interaction with the GATOR2 complex, leading to inhibit the TORC1 signaling pathway. Deubiquitinated at Lys-175 by STAMBPL1, promoting the TORC1 signaling pathway. Ubiquitinated by RNF186; ubiquitination mediates proteasomal degradation. Detected in heart, liver and skeletal muscles (at protein level).

It is found in the cytoplasm. The enzyme catalyses a hydroperoxide + L-cysteinyl-[protein] = S-hydroxy-L-cysteinyl-[protein] + an alcohol. Its function is as follows. Functions as an intracellular leucine sensor that negatively regulates the mTORC1 signaling pathway through the GATOR complex. In absence of leucine, binds the GATOR subcomplex GATOR2 and prevents mTORC1 signaling. Binding of leucine to SESN2 disrupts its interaction with GATOR2 thereby activating the TORC1 signaling pathway. This stress-inducible metabolic regulator also plays a role in protection against oxidative and genotoxic stresses. May negatively regulate protein translation in response to endoplasmic reticulum stress, via mTORC1. May positively regulate the transcription by NFE2L2 of genes involved in the response to oxidative stress by facilitating the SQSTM1-mediated autophagic degradation of KEAP1. May also mediate TP53 inhibition of TORC1 signaling upon genotoxic stress. Moreover, may prevent the accumulation of reactive oxygen species (ROS) through the alkylhydroperoxide reductase activity born by the N-terminal domain of the protein. Was originally reported to contribute to oxidative stress resistance by reducing PRDX1. However, this could not be confirmed. This chain is Sestrin-2, found in Mus musculus (Mouse).